The chain runs to 762 residues: Multifunctional tryptophan biosynthesis protein (762 aa).

The Glutamine amidotransferase type-1 domain occupies 25 to 224 (NLILIDNYDS…LHMQGGTWAE (200 aa)). 76–78 (GPG) contacts L-glutamine. C104 functions as the Nucleophile; for GATase activity in the catalytic mechanism. L-glutamine-binding positions include Q108 and 154–155 (SL). Residues H198 and E200 each act as for GATase activity in the active site. An indole-3-glycerol phosphate synthase region spans residues 251 to 515 (ILQKIYAHRK…DATQFIRELC (265 aa)). Residues 531–762 (LVKICGTRSA…EFVKAAKSVR (232 aa)) form an N-(5'-phosphoribosyl)anthranilate isomerase region.

In terms of assembly, tetramer of two components I and two components II.

It carries out the reaction chorismate + L-glutamine = anthranilate + pyruvate + L-glutamate + H(+). It catalyses the reaction N-(5-phospho-beta-D-ribosyl)anthranilate = 1-(2-carboxyphenylamino)-1-deoxy-D-ribulose 5-phosphate. The enzyme catalyses 1-(2-carboxyphenylamino)-1-deoxy-D-ribulose 5-phosphate + H(+) = (1S,2R)-1-C-(indol-3-yl)glycerol 3-phosphate + CO2 + H2O. It functions in the pathway amino-acid biosynthesis; L-tryptophan biosynthesis; L-tryptophan from chorismate: step 1/5. The protein operates within amino-acid biosynthesis; L-tryptophan biosynthesis; L-tryptophan from chorismate: step 3/5. It participates in amino-acid biosynthesis; L-tryptophan biosynthesis; L-tryptophan from chorismate: step 4/5. Its function is as follows. Trifunctional enzyme bearing the Gln amidotransferase (GATase) domain of anthranilate synthase, indole-glycerolphosphate synthase, and phosphoribosylanthranilate isomerase activities. This Neurospora crassa (strain ATCC 24698 / 74-OR23-1A / CBS 708.71 / DSM 1257 / FGSC 987) protein is Multifunctional tryptophan biosynthesis protein (trp-1).